Reading from the N-terminus, the 428-residue chain is Glutamate-1-semialdehyde 2,1-aminomutase (428 aa).

Residue Lys265 is modified to N6-(pyridoxal phosphate)lysine.

The protein belongs to the class-III pyridoxal-phosphate-dependent aminotransferase family. HemL subfamily. Homodimer. It depends on pyridoxal 5'-phosphate as a cofactor.

It localises to the cytoplasm. The catalysed reaction is (S)-4-amino-5-oxopentanoate = 5-aminolevulinate. It functions in the pathway porphyrin-containing compound metabolism; protoporphyrin-IX biosynthesis; 5-aminolevulinate from L-glutamyl-tRNA(Glu): step 2/2. The polypeptide is Glutamate-1-semialdehyde 2,1-aminomutase (Shewanella woodyi (strain ATCC 51908 / MS32)).